A 354-amino-acid polypeptide reads, in one-letter code: MVRILLATSTVELEDLVKRAIEGDASAELVLIARSGREAVRMTGELLPDIVAVELCPSGDDSAETVREIMIAAPTPVVMLSHRDGSQLGTISARALEAGALAVIPAPAAHGMQLEQPAIEKFLSTIKAMSQVKVVRQWRQKVRGDRAAKDQPPTARTPIGIVGIAASTGGPAAIRAILKDISADLPVPILIVQHMSNGFIDGVAASLNATVPLTVKVARNGELLKPGTVYLAPDNCQLGVSGRSRLRVSDDAPVNGFKPSGSYLFGSIARAFKGESLAVVLTGMGDDGTEGLRALRMAGGKAIAQDEKSSVVFGMPKSAIGAGLVDLVLPLESIAENITAIARGRSEPEGETRT.

A Response regulatory domain is found at 3-121 (RILLATSTVE…MQLEQPAIEK (119 aa)). The 183-residue stretch at 158–340 (PIGIVGIAAS…LESIAENITA (183 aa)) folds into the CheB-type methylesterase domain. Catalysis depends on residues serine 167, histidine 194, and aspartate 287.

It belongs to the CheB family.

It is found in the cytoplasm. The enzyme catalyses [protein]-L-glutamate 5-O-methyl ester + H2O = L-glutamyl-[protein] + methanol + H(+). It catalyses the reaction L-glutaminyl-[protein] + H2O = L-glutamyl-[protein] + NH4(+). Its function is as follows. Involved in chemotaxis. Part of a chemotaxis signal transduction system that modulates chemotaxis in response to various stimuli. Catalyzes the demethylation of specific methylglutamate residues introduced into the chemoreceptors (methyl-accepting chemotaxis proteins or MCP) by CheR. Also mediates the irreversible deamidation of specific glutamine residues to glutamic acid. In Rhizobium meliloti (strain 1021) (Ensifer meliloti), this protein is Protein-glutamate methylesterase/protein-glutamine glutaminase of group 3 operon.